The following is a 224-amino-acid chain: Ribosome maturation factor RimP (224 aa).

A disordered region spans residues 194-224; the sequence is REGRIPGDDLGSEEAGEQSDETASGEAEDKE. Residues 203 to 213 show a composition bias toward acidic residues; that stretch reads LGSEEAGEQSD.

The protein belongs to the RimP family.

The protein resides in the cytoplasm. Functionally, required for maturation of 30S ribosomal subunits. The protein is Ribosome maturation factor RimP of Brucella anthropi (strain ATCC 49188 / DSM 6882 / CCUG 24695 / JCM 21032 / LMG 3331 / NBRC 15819 / NCTC 12168 / Alc 37) (Ochrobactrum anthropi).